Here is a 496-residue protein sequence, read N- to C-terminus: Fizzy-related protein homolog (496 aa).

Disordered regions lie at residues 28–51 (RRTL…FIPS), 64–88 (INEN…GKDG), and 105–166 (EKVQ…SPRK). Phosphothreonine is present on Thr-32. The span at 32 to 42 (TPASSPVSSPS) shows a compositional bias: polar residues. Ser-36 bears the Phosphoserine mark. Positions 47-52 (RFIPSR) are involved in APC/FZR1 E3 ubiquitin-protein ligase complex activity. An N6-acetyllysine modification is found at Lys-69. Composition is skewed to basic and acidic residues over residues 76–86 (KAKDATSDNGK) and 106–126 (KVQD…EKKG). 4 positions are modified to phosphoserine: Ser-133, Ser-138, Ser-146, and Ser-151. Over residues 146-160 (SPYSLSPVSNKSQKL) the composition is skewed to polar residues. N6-acetyllysine is present on Lys-159. WD repeat units lie at residues 182–222 (PELQ…VTRL), 227–266 (VEGD…KLSM), 269–306 (GHTA…LQSE), 311–350 (GHRQ…PVQQ), 353–395 (EHLA…PLQC), 397–438 (DTGS…QVAK), and 441–480 (GHSY…RSTK).

It belongs to the WD repeat CDC20/Fizzy family. The unphosphorylated form interacts with APC/C during mitosis. Interacts with NINL. Interacts (in complex with the anaphase promoting complex APC) with MAD2L2; inhibits FZR1-mediated APC/C activation. Interacts with SIRT2 and USP37. Interacts (via WD repeats) with MAK. Interacts with RBBP8/CtIP; this interaction leads to RBBP8 proteasomal degradation. Interacts with HECW2. Interacts with SASS6; the interaction is regulated by CENATAC and leads to SASS6 proteasomal degradation. Interacts (via N-terminus) with CCNF. Interacts with CDC6. Interacts with TK1 (via the KEN box). Acetylated. Deacetylated by SIRT2 at Lys-69 and Lys-159; deacetylation enhances the interaction of FZR1 with CDC27, leading to activation of anaphase promoting complex/cyclosome (APC/C). Post-translationally, following DNA damage, it is dephosphorylated by CDC14B in G2 phase, leading to its reassociation with the APC/C, and allowing an efficient G2 DNA damage checkpoint. Phosphorylated by MAK. In terms of processing, ubiquitinated by the SCF(CCNF) E3 ubiquitin-protein ligase complex; leading to its degradation by the proteasome. In terms of tissue distribution, isoform 2 is expressed at high levels in heart, liver, spleen and some cancer cell lines whereas isoform 3 is expressed only at low levels in these tissues.

Its subcellular location is the nucleus. The protein localises to the cytoplasm. It participates in protein modification; protein ubiquitination. In terms of biological role, substrate-specific adapter for the anaphase promoting complex/cyclosome (APC/C) E3 ubiquitin-protein ligase complex. Associates with the APC/C in late mitosis, in replacement of CDC20, and activates the APC/C during anaphase and telophase. The APC/C remains active in degrading substrates to ensure that positive regulators of the cell cycle do not accumulate prematurely. At the G1/S transition FZR1 is phosphorylated, leading to its dissociation from the APC/C. Following DNA damage, it is required for the G2 DNA damage checkpoint: its dephosphorylation and reassociation with the APC/C leads to the ubiquitination of PLK1, preventing entry into mitosis. Acts as an adapter for APC/C to target the DNA-end resection factor RBBP8/CtIP for ubiquitination and subsequent proteasomal degradation. Through the regulation of RBBP8/CtIP protein turnover, may play a role in DNA damage response, favoring DNA double-strand repair through error-prone non-homologous end joining (NHEJ) over error-free, RBBP8-mediated homologous recombination (HR). The sequence is that of Fizzy-related protein homolog from Homo sapiens (Human).